Reading from the N-terminus, the 512-residue chain is PTS system mannitol-specific EIICB component (512 aa).

Over 1 to 28 (MSQTEEKKGIGRRVQAFGSFLSSMIMPN) the chain is Cytoplasmic. The PTS EIIC type-2 domain maps to 17 to 349 (FGSFLSSMIM…MKFTREPKQD (333 aa)). A helical transmembrane segment spans residues 29 to 50 (IGAFIAWGFIAAIFIDNGWLPN). Topologically, residues 51–54 (KDLA) are extracellular. Residues 55–75 (TLAGPMITYLIPLLIAFSGGR) traverse the membrane as a helical segment. Residues 76–139 (LIYDLRGGII…QGFEMLFNNF (64 aa)) are Cytoplasmic-facing. The chain crosses the membrane as a helical span at residues 140–161 (SAGILGFIMTIAGFKILAPLMK). At 162-170 (FIMHILSVA) the chain is on the extracellular side. Residues 171–191 (VEALVHAHLLPLVSILVEPAK) traverse the membrane as a helical segment. The Cytoplasmic segment spans residues 192-278 (IVFLNNAINH…VLMRPLLFIA (87 aa)). A helical membrane pass occupies residues 279–298 (VILGGMTGVATYQATGFGFK). The Extracellular segment spans residues 299 to 318 (SPASPGSFIVYCLNAPRGEF). The helical transmembrane segment at 319–340 (LHMLLGVFLAALVSFVVAALIM) threads the bilayer. Residues 341–512 (KFTREPKQDL…LNNLKKDDQA (172 aa)) lie on the Cytoplasmic side of the membrane. The disordered stretch occupies residues 355–402 (AQMENTKGKKSSVASKLVSSDKNVNTEENASGNVSETSSSDDDPEALL). Residues 365-376 (SSVASKLVSSDK) show a composition bias toward low complexity. The segment covering 380–392 (TEENASGNVSETS) has biased composition (polar residues). Residues 419–512 (NHVIFACDAG…LNNLKKDDQA (94 aa)) enclose the PTS EIIB type-2 domain. The Phosphocysteine intermediate; for EIIB activity role is filled by cysteine 425. The residue at position 425 (cysteine 425) is a Phosphocysteine; by EIIA.

Homodimer.

Its subcellular location is the cell membrane. It catalyses the reaction D-mannitol(out) + N(pros)-phospho-L-histidyl-[protein] = D-mannitol 1-phosphate(in) + L-histidyl-[protein]. The phosphoenolpyruvate-dependent sugar phosphotransferase system (sugar PTS), a major carbohydrate active transport system, catalyzes the phosphorylation of incoming sugar substrates concomitantly with their translocation across the cell membrane. The enzyme II CmtAB PTS system is involved in D-mannitol transport. The protein is PTS system mannitol-specific EIICB component (mtlA) of Staphylococcus aureus (strain Mu50 / ATCC 700699).